A 367-amino-acid chain; its full sequence is tRNA-specific 2-thiouridylase MnmA (367 aa).

ATP is bound by residues 14–21 (AMSGGVDS) and L40. C108 (nucleophile) is an active-site residue. The cysteines at positions 108 and 204 are disulfide-linked. An ATP-binding site is contributed by G132. Residues 154-156 (KDQ) form an interaction with tRNA region. C204 serves as the catalytic Cysteine persulfide intermediate.

The protein belongs to the MnmA/TRMU family.

The protein localises to the cytoplasm. The catalysed reaction is S-sulfanyl-L-cysteinyl-[protein] + uridine(34) in tRNA + AH2 + ATP = 2-thiouridine(34) in tRNA + L-cysteinyl-[protein] + A + AMP + diphosphate + H(+). In terms of biological role, catalyzes the 2-thiolation of uridine at the wobble position (U34) of tRNA, leading to the formation of s(2)U34. The sequence is that of tRNA-specific 2-thiouridylase MnmA from Rickettsia bellii (strain OSU 85-389).